Reading from the N-terminus, the 302-residue chain is GLABROUS1 enhancer-binding protein (302 aa).

2 disordered regions span residues 1–55 (MVTP…MKKK) and 158–229 (GQGD…NDDD). Residue S27 is modified to Phosphoserine. Residues 180 to 195 (RTNESGEEMLKEHEEE) show a composition bias toward basic and acidic residues. Residues 208–217 (AKTTENGTSS) show a composition bias toward polar residues. The segment at 270–291 (LSDEWKALCVEETRFNIKKLRF) is non-canonical leucine-zipper.

The protein belongs to the GeBP family. As to quaternary structure, homo- and heterodimers. Interacts with GPL1, GPL2 and GPL3. Interacts with KIN10, KIN11 and FLZ4. Interacts with KIN10 and KIN11 via its N-terminal part. Interacts with GPL1 and GPL3 via its C-terminal part. As to expression, expressed in the apical meristem and young leaf primordia. Not detected in emerging or mature leaves. Detected in the vascular tissues of cotyledons and leaves, in hydathodes and at the base of flowers and siliques, but not in roots.

It is found in the nucleus. The protein resides in the nucleolus. Functionally, DNA-binding protein, which specifically recognizes the GL1 enhancer sequence. May be involved in leaf initiation. May play redundant roles with GPL1 and GPL2 in cytokinin responses by regulating the transcript levels of type-A ARR response genes. Involved in stress responses. Plays a repressive role in cell expansion by counteracting the positive role of CPR5 in this process, but does not regulate cell proliferation or endoreduplication. May play a role in plant defense. This chain is GLABROUS1 enhancer-binding protein, found in Arabidopsis thaliana (Mouse-ear cress).